A 545-amino-acid chain; its full sequence is tRNA-2-methylthio-N(6)-dimethylallyladenosine synthase (545 aa).

The disordered stretch occupies residues 1–32 (MSSASPLARCCDEATPSAGPRAAQPPYHGPVT). An MTTase N-terminal domain is found at 58-174 (RTYQVRTYGC…LPTLLERARH (117 aa)). Residues C67, C103, C137, C211, C215, and C218 each contribute to the [4Fe-4S] cluster site. Residues 197–433 (RESAYAAWVS…IALQEQISLE (237 aa)) form the Radical SAM core domain. Residues 436-504 (RALVGQAVEV…PHHLIADAGV (69 aa)) form the TRAM domain.

This sequence belongs to the methylthiotransferase family. MiaB subfamily. Monomer. [4Fe-4S] cluster is required as a cofactor.

The protein localises to the cytoplasm. The enzyme catalyses N(6)-dimethylallyladenosine(37) in tRNA + (sulfur carrier)-SH + AH2 + 2 S-adenosyl-L-methionine = 2-methylsulfanyl-N(6)-dimethylallyladenosine(37) in tRNA + (sulfur carrier)-H + 5'-deoxyadenosine + L-methionine + A + S-adenosyl-L-homocysteine + 2 H(+). Catalyzes the methylthiolation of N6-(dimethylallyl)adenosine (i(6)A), leading to the formation of 2-methylthio-N6-(dimethylallyl)adenosine (ms(2)i(6)A) at position 37 in tRNAs that read codons beginning with uridine. This is tRNA-2-methylthio-N(6)-dimethylallyladenosine synthase from Mycobacterium bovis (strain BCG / Pasteur 1173P2).